The chain runs to 302 residues: DDRGK domain-containing protein 1 (302 aa).

At 1-5 (MDGGG) the chain is on the lumenal side. A helical membrane pass occupies residues 6 to 26 (GMLGAVVCLLLVFAIFPLLLW). Residues 27 to 302 (RRRSDAAHRL…DENAAAGTEL (276 aa)) are Cytoplasmic-facing. Disordered stretches follow at residues 36–151 (LPPQ…EEAR) and 279–302 (DLEPKPQYNEESNLDENAAAGTEL). A compositionally biased stretch (acidic residues) spans 79-91 (VDDADSDLEEEIQ). Over residues 103 to 151 (KRQDREAQRQAEEAARDSRRTKQDRYAEMRRKKDEEREAQERLMEEEAR) the composition is skewed to basic and acidic residues.

The protein belongs to the DDRGK1 family.

The protein resides in the endoplasmic reticulum membrane. Functionally, substrate adapter for ufmylation, the covalent attachment of the ubiquitin-like modifier UFM1 to substrate proteins. The polypeptide is DDRGK domain-containing protein 1 (Oryza sativa subsp. japonica (Rice)).